The chain runs to 255 residues: Aliphatic sulfonates import ATP-binding protein SsuB (255 aa).

The ABC transporter domain occupies Ile5–Gln231. Gly39–Ser46 lines the ATP pocket.

The protein belongs to the ABC transporter superfamily. Aliphatic sulfonates importer (TC 3.A.1.17.2) family. In terms of assembly, the complex is composed of two ATP-binding proteins (SsuB), two transmembrane proteins (SsuC) and a solute-binding protein (SsuA).

Its subcellular location is the cell membrane. It carries out the reaction ATP + H2O + aliphatic sulfonate-[sulfonate-binding protein]Side 1 = ADP + phosphate + aliphatic sulfonateSide 2 + [sulfonate-binding protein]Side 1.. In terms of biological role, part of the ABC transporter complex SsuABC involved in aliphatic sulfonates import. Responsible for energy coupling to the transport system. The polypeptide is Aliphatic sulfonates import ATP-binding protein SsuB (Bacillus licheniformis (strain ATCC 14580 / DSM 13 / JCM 2505 / CCUG 7422 / NBRC 12200 / NCIMB 9375 / NCTC 10341 / NRRL NRS-1264 / Gibson 46)).